A 184-amino-acid polypeptide reads, in one-letter code: NADH-quinone oxidoreductase subunit B (184 aa).

[4Fe-4S] cluster contacts are provided by C37, C38, C103, and C132.

The protein belongs to the complex I 20 kDa subunit family. As to quaternary structure, NDH-1 is composed of 14 different subunits. Subunits NuoB, C, D, E, F, and G constitute the peripheral sector of the complex. [4Fe-4S] cluster serves as cofactor.

It localises to the cell membrane. It catalyses the reaction a quinone + NADH + 5 H(+)(in) = a quinol + NAD(+) + 4 H(+)(out). NDH-1 shuttles electrons from NADH, via FMN and iron-sulfur (Fe-S) centers, to quinones in the respiratory chain. The immediate electron acceptor for the enzyme in this species is believed to be a menaquinone. Couples the redox reaction to proton translocation (for every two electrons transferred, four hydrogen ions are translocated across the cytoplasmic membrane), and thus conserves the redox energy in a proton gradient. In Mycolicibacterium smegmatis (strain ATCC 700084 / mc(2)155) (Mycobacterium smegmatis), this protein is NADH-quinone oxidoreductase subunit B.